A 277-amino-acid polypeptide reads, in one-letter code: F420-dependent methylenetetrahydromethanopterin dehydrogenase (277 aa).

The protein belongs to the MTD family.

The enzyme catalyses 5,10-methylenetetrahydromethanopterin + oxidized coenzyme F420-(gamma-L-Glu)(n) + 2 H(+) = 5,10-methenyl-5,6,7,8-tetrahydromethanopterin + reduced coenzyme F420-(gamma-L-Glu)(n). It functions in the pathway one-carbon metabolism; methanogenesis from CO(2); 5,10-methylene-5,6,7,8-tetrahydromethanopterin from 5,10-methenyl-5,6,7,8-tetrahydromethanopterin (coenzyme F420 route): step 1/1. Functionally, catalyzes the reversible reduction of methenyl-H(4)MPT(+) to methylene-H(4)MPT. This Methanococcus maripaludis (strain C7 / ATCC BAA-1331) protein is F420-dependent methylenetetrahydromethanopterin dehydrogenase.